Here is a 456-residue protein sequence, read N- to C-terminus: UDP-N-acetylmuramoylalanine--D-glutamate ligase (456 aa).

Residue 119-125 (GSNGKTT) participates in ATP binding.

It belongs to the MurCDEF family.

The protein localises to the cytoplasm. The enzyme catalyses UDP-N-acetyl-alpha-D-muramoyl-L-alanine + D-glutamate + ATP = UDP-N-acetyl-alpha-D-muramoyl-L-alanyl-D-glutamate + ADP + phosphate + H(+). It functions in the pathway cell wall biogenesis; peptidoglycan biosynthesis. Functionally, cell wall formation. Catalyzes the addition of glutamate to the nucleotide precursor UDP-N-acetylmuramoyl-L-alanine (UMA). This chain is UDP-N-acetylmuramoylalanine--D-glutamate ligase, found in Limosilactobacillus reuteri (strain DSM 20016) (Lactobacillus reuteri).